The primary structure comprises 607 residues: Aspartate--tRNA(Asp/Asn) ligase (607 aa).

Glutamate 168 contributes to the L-aspartate binding site. The aspartate stretch occupies residues 192-195; the sequence is QLFK. Arginine 214 contributes to the L-aspartate binding site. ATP-binding positions include 214 to 216 and glutamine 223; that span reads RDE. Histidine 449 contributes to the L-aspartate binding site. Glutamate 483 provides a ligand contact to ATP. Arginine 490 is a binding site for L-aspartate. 535 to 538 lines the ATP pocket; that stretch reads GWDR. The interval 578 to 607 is disordered; it reads LEAGVDARPKPEARAQAGTAGPAAPVADPT. Positions 580–590 are enriched in basic and acidic residues; the sequence is AGVDARPKPEA. Over residues 591–607 the composition is skewed to low complexity; it reads RAQAGTAGPAAPVADPT.

Belongs to the class-II aminoacyl-tRNA synthetase family. Type 1 subfamily. Homodimer.

Its subcellular location is the cytoplasm. The catalysed reaction is tRNA(Asx) + L-aspartate + ATP = L-aspartyl-tRNA(Asx) + AMP + diphosphate. Its function is as follows. Aspartyl-tRNA synthetase with relaxed tRNA specificity since it is able to aspartylate not only its cognate tRNA(Asp) but also tRNA(Asn). Reaction proceeds in two steps: L-aspartate is first activated by ATP to form Asp-AMP and then transferred to the acceptor end of tRNA(Asp/Asn). The protein is Aspartate--tRNA(Asp/Asn) ligase of Salinispora tropica (strain ATCC BAA-916 / DSM 44818 / JCM 13857 / NBRC 105044 / CNB-440).